The primary structure comprises 124 residues: Small ribosomal subunit protein uS12 (124 aa).

3-methylthioaspartic acid is present on aspartate 89.

It belongs to the universal ribosomal protein uS12 family. In terms of assembly, part of the 30S ribosomal subunit. Contacts proteins S8 and S17. May interact with IF1 in the 30S initiation complex.

Functionally, with S4 and S5 plays an important role in translational accuracy. Interacts with and stabilizes bases of the 16S rRNA that are involved in tRNA selection in the A site and with the mRNA backbone. Located at the interface of the 30S and 50S subunits, it traverses the body of the 30S subunit contacting proteins on the other side and probably holding the rRNA structure together. The combined cluster of proteins S8, S12 and S17 appears to hold together the shoulder and platform of the 30S subunit. In Tolumonas auensis (strain DSM 9187 / NBRC 110442 / TA 4), this protein is Small ribosomal subunit protein uS12.